The primary structure comprises 359 residues: RuBisCO accumulation factor 1 (359 aa).

The interval 12 to 195 (LSPEETDALF…RQKIEQLLSD (184 aa)) is N-terminal alpha-helix. Positions 219–345 (PLLIPVAGSL…VLLVMRPKKI (127 aa)) are C-terminal beta-sheet.

Belongs to the RAF family. In terms of assembly, homodimer. Forms an RbcL(8)-Raf1(8) complex. Forms complexes of many stoichiometries with RbcL with and without RbcS. RbcX and Raf1 can bind simultaneously to RbcL.

The protein resides in the cytoplasm. A major RuBisCO chaperone. Acts after GroEL-GroES chaperonin to fold and/or assemble the large subunit of RuBisCO (ccbL, rbcL). Cooperates with RbcX in RbcL folding, plays the major role in assembly of dimers into RbcL(8)-Raf1(8) intermediate complexes. RbcS replaces Raf1, leading to holoenzyme formation. Its function is as follows. Raf1 and RbcX are probably functionally redundant; it has been suggested they may cooperate. The polypeptide is RuBisCO accumulation factor 1 (Picosynechococcus sp. (strain ATCC 27264 / PCC 7002 / PR-6) (Agmenellum quadruplicatum)).